We begin with the raw amino-acid sequence, 272 residues long: Phosphate import ATP-binding protein PstB (272 aa).

The ABC transporter domain maps to 26-267 (VAARNLNFYY…PADRRTQDYI (242 aa)). 58–65 (GPSGCGKS) is a binding site for ATP.

This sequence belongs to the ABC transporter superfamily. Phosphate importer (TC 3.A.1.7) family. The complex is composed of two ATP-binding proteins (PstB), two transmembrane proteins (PstC and PstA) and a solute-binding protein (PstS).

It localises to the cell inner membrane. The enzyme catalyses phosphate(out) + ATP + H2O = ADP + 2 phosphate(in) + H(+). Its function is as follows. Part of the ABC transporter complex PstSACB involved in phosphate import. Responsible for energy coupling to the transport system. In Nitrobacter hamburgensis (strain DSM 10229 / NCIMB 13809 / X14), this protein is Phosphate import ATP-binding protein PstB.